The chain runs to 1201 residues: HEAT repeat-containing protein 6 (1201 aa).

Residues 1–25 (MAGKVTFLGSNSSFSPDGKTQGFKS) form a disordered region. An HEAT 1 repeat occupies 182-221 (PDLLGPSGVLVKYGDPKQPDIELRRSAVHCIANLCLSVPS). Residues 321 to 390 (AVKPEPAQDT…SQSSMLTSPS (70 aa)) form a disordered region. Over residues 341–352 (QKKRKSRGKGKK) the composition is skewed to basic residues. Residues 375–390 (SGWSHGSQSSMLTSPS) show a composition bias toward polar residues. 3 HEAT repeats span residues 460-498 (GIGG…GSRQ), 523-560 (SIRE…NVPY), and 566-603 (GLLS…TQAP). Residues 618-633 (SSLGSGISTPQESPLS) show a composition bias toward polar residues. The interval 618–653 (SSLGSGISTPQESPLSWRQPARRDEEASSPAAAEGP) is disordered.

The protein is HEAT repeat-containing protein 6 (heatr6) of Danio rerio (Zebrafish).